A 206-amino-acid chain; its full sequence is uncharacterized protein (206 aa).

Disordered regions lie at residues 64–123 (NTES…DPSL) and 155–206 (VTTP…SSGG). A compositionally biased stretch (polar residues) spans 66–79 (ESTQKTATTQQQGL). Over residues 97–107 (AENNAQANQSE) the composition is skewed to low complexity. Over residues 108–118 (NRAESTTKAES) the composition is skewed to basic and acidic residues. The segment covering 155–167 (VTTPTGQVVQPQT) has biased composition (low complexity). The span at 182 to 198 (GSMNSKPVSRGGFSSPN) shows a compositional bias: polar residues.

This is an uncharacterized protein from Haemophilus influenzae (strain ATCC 51907 / DSM 11121 / KW20 / Rd).